Consider the following 893-residue polypeptide: MNESSHRITPMLEQYLSIKSNYPDTLLFYRMGDFYELFFEDAETAARELQIALTARNPRAENPVPMCGVPWHAADSYIHQLIQKGYKVALCEQTEDFRESKGLVQRKVTRVFTSATTTEETSLDPKTHTYLGAMYWDEEVNIGAFCWADVSTGLWTGIQVKKKSELWQWIQKILPKELLFPEKYELPATAKLIEIQFVPLPYKTHFEYPQAVKRLLQAQGVADLEALGLEKHTILVQACGALVAYLEQTQLQDVNHLMPFKPLDIGKYVILDEITEKNLELFKRVNGKKGVGTLIHVLDHTLTPMGGRLLEERLHHPWRDITTILENQSVLEWLILYKENMKKLQDALKAIYDLERLSTRIVLNRTSPKDLLALKNTLLILPRVKDALIVEINVKDNRYITIDESILSTMPTILRQLLTKWDNISDYAEKLDKALDENPPNSIVEGGLFKLGFNAELDELMDLLEHGESKLQALLEKEQKVNNLPRLKIGFNRVFGYYFELTKSAGTPPSHFVRRQTLANAERYTTEELKDLEERLLSATEKRNTLEYKLFQKLREELVSIRPRILFMASLIAQLDLWQSLADVAIRHNWNKPTLLTNNNIFIREGRHPVIESIIGKSVFVPNDLVMDETRRMLLITGPNMAGKSTVLRQTAIICLLAHMGSFVPATEAQIGICDRIFSRVGASDNLARGQSTFMVEMMETARILRQATSRSLVILDEIGRGTSTFDGLALAWAVAEDLVCKDHDGVRTLFATHYHELTALEEKLTGVHTMTIAIRHWNDELVFLYRLIPGPADRSYGIEVARLAGVPQSVIQRAKIILTQLEQTHQQPRSLLNLLPGVVQNANEELSKQDVKVVEHPVVTLLKEMNPETLTPLDALKSLVEWKLLYGTTHAT.

ATP is bound at residue 638–645; the sequence is GPNMAGKS.

This sequence belongs to the DNA mismatch repair MutS family.

Its function is as follows. This protein is involved in the repair of mismatches in DNA. It is possible that it carries out the mismatch recognition step. This protein has a weak ATPase activity. The sequence is that of DNA mismatch repair protein MutS from Lawsonia intracellularis (strain PHE/MN1-00).